A 294-amino-acid polypeptide reads, in one-letter code: MTKKVFDDISRLALKALLYEVSLSPKPGLVDQLDNGAHDDMSFLTFVDSALALAPFFKIYLDIGFYHAKEDPGLIFERLRASGIEAEQAMFSATKGVNTHKGVNFSLALLLGATGMYLADQPQLLDHVTAFTEEDSLAICQLVKPLTAHLLETDFGSLDLKKELTYGEKLFLDYGIKGPRGEASEGYPTIAHKALPFLRKSLRSTDQETAQLQLLVYLMSIVEDGNLIHRGGIKAWRQVKQDMLLLHNSSLSTADLKAALSAYNDKLIQKNLSPGGTADLLVLSLYFAFLENQL.

This sequence belongs to the CitG/MdcB family.

The catalysed reaction is 3'-dephospho-CoA + ATP = 2'-(5''-triphospho-alpha-D-ribosyl)-3'-dephospho-CoA + adenine. This is Probable 2-(5''-triphosphoribosyl)-3'-dephosphocoenzyme-A synthase from Streptococcus equi subsp. equi (strain 4047).